Consider the following 60-residue polypeptide: Large ribosomal subunit protein uL30 (60 aa).

It belongs to the universal ribosomal protein uL30 family. Part of the 50S ribosomal subunit.

This Histophilus somni (strain 2336) (Haemophilus somnus) protein is Large ribosomal subunit protein uL30.